Reading from the N-terminus, the 287-residue chain is ATP synthase gamma chain (287 aa).

It belongs to the ATPase gamma chain family. In terms of assembly, F-type ATPases have 2 components, CF(1) - the catalytic core - and CF(0) - the membrane proton channel. CF(1) has five subunits: alpha(3), beta(3), gamma(1), delta(1), epsilon(1). CF(0) has three main subunits: a, b and c.

Its subcellular location is the cell inner membrane. Functionally, produces ATP from ADP in the presence of a proton gradient across the membrane. The gamma chain is believed to be important in regulating ATPase activity and the flow of protons through the CF(0) complex. This chain is ATP synthase gamma chain, found in Colwellia maris.